A 659-amino-acid polypeptide reads, in one-letter code: ATP-binding cassette sub-family D member 3 (659 aa).

An interaction with PEX19 region spans residues 1–61; the sequence is MAAFSKYLTA…GKKERAVVDK (61 aa). N-linked (GlcNAc...) asparagine glycosylation occurs at asparagine 12. Lysine 61 is modified (N6-acetyllysine). The chain crosses the membrane as a helical span at residues 84–104; that stretch reads GYLVLIAVMLVSRTYCDVWMI. The 288-residue stretch at 85 to 372 folds into the ABC transmembrane type-1 domain; it reads YLVLIAVMLV…MLLRMSQALG (288 aa). Asparagine 106 carries N-linked (GlcNAc...) asparagine glycosylation. Residues 126 to 146 form a helical membrane-spanning segment; sequence LLNFIAAMPLISLVNNFLKYG. An N-linked (GlcNAc...) asparagine glycan is attached at asparagine 206. The chain crosses the membrane as a helical span at residues 224-244; the sequence is AIGAQGPASMMAYLVVSGLFL. Lysine 260 carries the N6-acetyllysine modification. A helical transmembrane segment spans residues 313-333; sequence MGFIDSIIAKYLATVVGYLVV. Residue lysine 399 is modified to N6-acetyllysine. The ABC transporter domain maps to 440–659; it reads IKFDHVPLAT…ITEDTVEFGS (220 aa). 473–480 is an ATP binding site; it reads GPNGCGKS. An N6-acetyllysine modification is found at lysine 533. A Phosphoserine modification is found at serine 659.

This sequence belongs to the ABC transporter superfamily. ABCD family. Peroxisomal fatty acyl CoA transporter (TC 3.A.1.203) subfamily. In terms of assembly, homodimers. Can form heterodimers with ABCD1 and ABCD2. Dimerization is necessary to form an active transporter. Interacts with PEX19; mediates the targeting of ABCD3 to peroxisomes. Post-translationally, ubiquitinated by PEX2 during pexophagy in response to starvation, leading to its degradation.

The protein resides in the peroxisome membrane. It carries out the reaction a very long-chain fatty acyl-CoA + H2O = a very long-chain fatty acid + CoA + H(+). The catalysed reaction is a very long-chain fatty acid(in) + ATP + H2O = a very long-chain fatty acid(out) + ADP + phosphate + H(+). It catalyses the reaction a long-chain fatty acyl-CoA + H2O = a long-chain fatty acid + CoA + H(+). The enzyme catalyses a long-chain fatty acid(in) + ATP + H2O = a long-chain fatty acid(out) + ADP + phosphate + H(+). It carries out the reaction pristanoyl-CoA + H2O = 2,6,10,14-tetramethylpentadecanoate + CoA + H(+). The catalysed reaction is 2,6,10,14-tetramethylpentadecanoate(in) + ATP + H2O = 2,6,10,14-tetramethylpentadecanoate(out) + ADP + phosphate + H(+). It catalyses the reaction hexadecanedioyl-CoA + H2O = hexadecanedioate + CoA + H(+). The enzyme catalyses hexadecanedioate(in) + ATP + H2O = hexadecanedioate(out) + ADP + phosphate + H(+). It carries out the reaction (5Z,8Z,11Z,14Z,17Z)-eicosapentaenoyl-CoA + H2O = (5Z,8Z,11Z,14Z,17Z)-eicosapentaenoate + CoA + H(+). The catalysed reaction is (5Z,8Z,11Z,14Z,17Z)-eicosapentaenoate(in) + ATP + H2O = (5Z,8Z,11Z,14Z,17Z)-eicosapentaenoate(out) + ADP + phosphate + H(+). It catalyses the reaction (4Z,7Z,10Z,13Z,16Z,19Z)-docosahexaenoyl-CoA + H2O = (4Z,7Z,10Z,13Z,16Z,19Z)-docosahexaenoate + CoA + H(+). The enzyme catalyses (4Z,7Z,10Z,13Z,16Z,19Z)-docosahexaenoate(in) + ATP + H2O = (4Z,7Z,10Z,13Z,16Z,19Z)-docosahexaenoate(out) + ADP + phosphate + H(+). Its function is as follows. Broad substrate specificity ATP-dependent transporter of the ATP-binding cassette (ABC) family that catalyzes the transport of long-chain fatty acids (LCFA)-CoA, dicarboxylic acids-CoA, long-branched-chain fatty acids-CoA and bile acids from the cytosol to the peroxisome lumen for beta-oxydation. Has fatty acyl-CoA thioesterase and ATPase activities. Probably hydrolyzes fatty acyl-CoAs into free fatty acids prior to their ATP-dependent transport into peroxisomes. Thus, play a role in regulation of LCFAs and energy metabolism namely, in the degradation and biosynthesis of fatty acids by beta-oxidation. This Homo sapiens (Human) protein is ATP-binding cassette sub-family D member 3.